We begin with the raw amino-acid sequence, 152 residues long: Superoxide dismutase [Cu-Zn] (152 aa).

Cu cation contacts are provided by His45, His47, and His62. Cys56 and Cys145 are joined by a disulfide. Residues His62, His70, His79, and Asp82 each contribute to the Zn(2+) site. His119 serves as a coordination point for Cu cation.

It belongs to the Cu-Zn superoxide dismutase family. Homodimer. Requires Cu cation as cofactor. Zn(2+) serves as cofactor.

It localises to the cytoplasm. It carries out the reaction 2 superoxide + 2 H(+) = H2O2 + O2. Destroys radicals which are normally produced within the cells and which are toxic to biological systems. This chain is Superoxide dismutase [Cu-Zn] (SODCC), found in Ipomoea batatas (Sweet potato).